A 111-amino-acid chain; its full sequence is Nucleoid-associated protein PSEEN1789 (111 aa).

Disordered stretches follow at residues 1–25 and 89–111; these read MMKG…KMQE and NSQD…KMPF.

It belongs to the YbaB/EbfC family. As to quaternary structure, homodimer.

It is found in the cytoplasm. The protein resides in the nucleoid. Its function is as follows. Binds to DNA and alters its conformation. May be involved in regulation of gene expression, nucleoid organization and DNA protection. The protein is Nucleoid-associated protein PSEEN1789 of Pseudomonas entomophila (strain L48).